Consider the following 243-residue polypeptide: Ornithine decarboxylase antizyme 3 (243 aa).

Phosphoserine is present on residues Ser6, Ser9, and Ser12.

It belongs to the ODC antizyme family. In terms of assembly, interacts with ODC1 and thereby sterically blocks ODC homodimerization. Interacts with AZIN2; this interaction disrupts the interaction between the antizyme and ODC1. Interacts with GGN. Isoform 2 interacts with PPP1R16A; Modulates PPP1CB activity. Testis-specific. Isoform 2 is expressed in outer dense fibers, fibrous sheath and the connecting piece of sperm.

It localises to the nucleus. It is found in the cytoplasm. The protein localises to the cell projection. The protein resides in the cilium. Its subcellular location is the flagellum. In terms of biological role, ornithine decarboxylase (ODC) antizyme protein that negatively regulates ODC activity and intracellular polyamine biosynthesis and uptake in response to increased intracellular polyamine levels. Binds to ODC monomers, inhibiting the assembly of the functional ODC homodimers. Does not target the ODC monomers for degradation, which allows a protein synthesis-independent restoration of ODC activity. Stabilizes AZIN2 by interfering with its ubiquitination. Involved in the translocation of AZNI2 from ER-Golgi intermediate compartment (ERGIC) to the cytosol. Probably plays a key role in spermatogenesis by regulating the intracellular concentration of polyamines in haploid germ cells. Does not possess antizyme activity. Modulates PPP1CB activity through its interaction with PPP1R16A. The chain is Ornithine decarboxylase antizyme 3 from Rattus norvegicus (Rat).